The following is a 1034-amino-acid chain: Sodium bicarbonate cotransporter 3 (1034 aa).

2 disordered regions span residues 1–31 (MEADGAGEQMRPLLTRGPDEEAVVDLGKTSS) and 53–99 (HVPF…SQRV). Over 1 to 476 (MEADGAGEQM…DFKDALSLQC (476 aa)) the chain is Extracellular. Phosphoserine is present on residues Ser57, Ser60, Ser89, and Ser155. Over residues 60–77 (SRRRHKHRGHKHHHRRRK) the composition is skewed to basic residues. Basic and acidic residues predominate over residues 78–90 (DKDSDKEDGRESP). Asn176 is a glycosylation site (N-linked (GlcNAc...) asparagine). Phosphoserine occurs at positions 238, 250, 260, 263, 268, and 271. Over residues 250–260 (SAPGNLDNSKS) the composition is skewed to polar residues. Residues 250–276 (SAPGNLDNSKSGEMKGNGSGGSRENST) form a disordered region. Residue Asn274 is glycosylated (N-linked (GlcNAc...) asparagine). Phosphoserine is present on residues Ser275 and Ser424. A helical transmembrane segment spans residues 477–497 (LASILFLYCACMSPVITFGGL). Topologically, residues 498–505 (LGEATEGR) are cytoplasmic. The helical transmembrane segment at 506–526 (ISAIESLFGASLTGIAYSLFA) threads the bilayer. The Extracellular segment spans residues 527–563 (GQPLTILGSTGPVLVFEKILFKFCRDYHLSYLSLRTS). Residues 564–584 (IGLWTSFLCIVLVATDASSLV) traverse the membrane as a helical segment. Topologically, residues 585–593 (CYITRFTEE) are cytoplasmic. The helical transmembrane segment at 594–614 (AFAALICIIFIYEALEKLFHL) threads the bilayer. The Extracellular portion of the chain corresponds to 615 to 685 (GEIYAFNMHN…MFVGSACGPH (71 aa)). An intrachain disulfide couples Cys634 to Cys636. Asn644, Asn654, and Asn664 each carry an N-linked (GlcNAc...) asparagine glycan. A disulfide bridge connects residues Cys670 and Cys682. A helical membrane pass occupies residues 686 to 706 (GPYVPDVLFWCVVLFFTTFFL). At 707–729 (SSFLKQFKTKGYFPTKVRSTISD) the chain is on the cytoplasmic side. The chain crosses the membrane as a helical span at residues 730–750 (FAVFLTIVIMVAIDYLVGIPS). Topologically, residues 751-776 (PKLHVPEKFEPTDPSRGWIISPLGDN) are extracellular. A helical transmembrane segment spans residues 777–797 (PWWTLLIAAVPALLCTILIFM). At 798–812 (DQQITAVIINRKEHK) the chain is on the cytoplasmic side. Residues 813–833 (LKFIPMPVLYGVFLYMGVSSL) traverse the membrane as a helical segment. The tract at residues 815-915 (FIPMPVLYGV…MDLCFTKREL (101 aa)) is essential for cell membrane localization and transport activity. The Extracellular portion of the chain corresponds to 834–876 (KGIQFFDRIKLFGMPAKHQPDLIYLRYVPLWKVHVFTVVQLTC). A helical membrane pass occupies residues 877-897 (LVLLWVIKASAAAVVFPMMVL). At 898 to 1034 (ALVFVRKLMD…KKYMDAETSL (137 aa)) the chain is on the cytoplasmic side. Residues 918–920 (LDD) are CA2-binding. The segment at 926–946 (KKKKEDDKKKKEKEEAERMLQ) is disordered. Residue Thr951 is modified to Phosphothreonine. 2 positions are modified to phosphoserine: Ser960 and Ser1033. The PDZ-binding motif lies at 1031-1034 (ETSL).

This sequence belongs to the anion exchanger (TC 2.A.31) family. As to quaternary structure, forms a complex with ATP6V1B1 and NHERF1/EBP50. Interacts in a pH dependent-manner with CA2/carbonic anhydrase 2. Interacts with CFTR through NHERF1/EBP50. Interacts with USH1C. As to expression, expressed in the spiral ligament throughout the cochlea and in photoreceptors of the outer plexiform layer of the retina (at protein level).

It localises to the basolateral cell membrane. It is found in the apical cell membrane. The protein localises to the cell projection. Its subcellular location is the stereocilium. The protein resides in the cell membrane. The enzyme catalyses hydrogencarbonate(in) + Na(+)(in) = hydrogencarbonate(out) + Na(+)(out). With respect to regulation, activity is inhibited by 4,4'-di-isothiocyanatostilbene-2,2'-disulfonic acid (DIDS - an inhibitor of several anion channels and transporters). Its function is as follows. Electroneutral sodium- and bicarbonate-dependent cotransporter with a Na(+):HCO3(-) 1:1 stoichiometry. Mediates the sodium-dependent bicarbonate transport important for pH recovery after acid load as well as for regulation of steady-state pH in the duodenum and vascular smooth muscle cells. Plays a key role in macrophage acidification, mediating bicarbonate import into the cytoplasm which is crucial for net acid extrusion and maintenance of cytoplasmic pH during phagocytosis. Provides cellular bicarbonate for de novo purine and pyrimidine synthesis and is a key mediator of de novo nucleotide synthesis downstream of mTORC1 signaling in proliferating cells. May be involved in maintaining locomotor activity, exploratory behavior, and hearing. The protein is Sodium bicarbonate cotransporter 3 (Slc4a7) of Mus musculus (Mouse).